A 505-amino-acid chain; its full sequence is Zealexin A1 synthase (505 aa).

Residues 7 to 26 (IAVGTVAVVAVLSKLKSAVT) traverse the membrane as a helical segment. Cys442 contributes to the heme binding site.

Belongs to the cytochrome P450 family. The cofactor is heme.

It is found in the membrane. It catalyses the reaction (S)-beta-macrocarpene + 3 reduced [NADPH--hemoprotein reductase] + 3 O2 = zealexin A1 + 3 oxidized [NADPH--hemoprotein reductase] + 4 H2O + 4 H(+). In terms of biological role, involved in production of the antifungal phytoalexin zealexin A1. The enzyme sequentially oxidizes(S)-beta-macrocarpene via alcohol and aldehyde intermediates to form zealexin A1, a maize phytoalexin that provides biochemical protection against fungal infection. The protein is Zealexin A1 synthase of Zea mays (Maize).